Reading from the N-terminus, the 757-residue chain is RNA-directed RNA polymerase catalytic subunit (757 aa).

The disordered stretch occupies residues 50–82 (SEKGKWTTNTETGAPQLNPIDGPLPEDNEPSGY). Positions 55 to 64 (WTTNTETGAP) are enriched in polar residues. 2 short sequence motifs (nuclear localization signal) span residues 187-195 (RKRRVRDNM) and 203-216 (RTIGKKKQRLNKRS). The promoter-binding site stretch occupies residues 249 to 256 (RGFVYFVE). One can recognise a RdRp catalytic domain in the interval 286 to 483 (VRKMMTNSQD…GINMSKKKSY (198 aa)).

Belongs to the influenza viruses polymerase PB1 family. Influenza RNA polymerase is composed of three subunits: PB1, PB2 and PA. Interacts (via N-terminus) with PA (via C-terminus). Interacts (via C-terminus) with PB2 (via N-terminus); this interaction is essential for transcription initiation. Post-translationally, phosphorylated by host PRKCA.

The protein localises to the host nucleus. It is found in the host cytoplasm. The catalysed reaction is RNA(n) + a ribonucleoside 5'-triphosphate = RNA(n+1) + diphosphate. Functionally, RNA-dependent RNA polymerase which is responsible for replication and transcription of virus RNA segments. The transcription of viral mRNAs occurs by a unique mechanism called cap-snatching. 5' methylated caps of cellular mRNAs are cleaved after 10-13 nucleotides by PA. In turn, these short capped RNAs are used as primers by PB1 for transcription of viral mRNAs. During virus replication, PB1 initiates RNA synthesis and copy vRNA into complementary RNA (cRNA) which in turn serves as a template for the production of more vRNAs. The protein is RNA-directed RNA polymerase catalytic subunit of Influenza A virus (strain A/Chicken/Hong Kong/715.5/2001 H5N1 genotype E).